Reading from the N-terminus, the 143-residue chain is MSKITLIGTDLAKAGMEFTFVGPLSGKCDECSLRNVCFNLEKGRHYRILNVRENINPCFIYNKNKVSTIEVEEATSTFNVQYSRRIMEGSSIELKSMECDYLTCPNIETCNLIHIKEPRKIVIKKILGRIECPKGYDMRKIES.

Belongs to the UPF0179 family.

This is UPF0179 protein PTO0851 from Picrophilus torridus (strain ATCC 700027 / DSM 9790 / JCM 10055 / NBRC 100828 / KAW 2/3).